The chain runs to 137 residues: Protein yippee-like F37A8.5 (137 aa).

A disordered region spans residues 1 to 20 (MHFRMKVLENSSKHNTPKKQ). The region spanning 32-129 (RCYSCIHCRA…IELAHMVKDN (98 aa)) is the Yippee domain. Cys36, Cys39, Cys92, and Cys95 together coordinate Zn(2+).

It belongs to the yippee family.

The sequence is that of Protein yippee-like F37A8.5 from Caenorhabditis elegans.